We begin with the raw amino-acid sequence, 504 residues long: Protein DETOXIFICATION 38 (504 aa).

12 consecutive transmembrane segments (helical) span residues 56–76, 90–110, 139–159, 170–190, 208–228, 234–254, 273–295, 316–336, 356–376, 401–421, 433–453, and 457–477; these read LLLR…GMGI, LAAA…MLGM, IVLA…YPIL, YMGS…AVYF, ISAA…YAMG, IAYV…FYVI, GLWS…LWYT, SICM…NAAV, TWTA…VVIA, FLAV…VAVG, IGCY…TFNF, and GIWT…LYVT.

The protein belongs to the multi antimicrobial extrusion (MATE) (TC 2.A.66.1) family.

It localises to the membrane. In Arabidopsis thaliana (Mouse-ear cress), this protein is Protein DETOXIFICATION 38.